Consider the following 453-residue polypeptide: Bifunctional protein GlmU (453 aa).

The pyrophosphorylase stretch occupies residues 1–226 (MKFSAVILAA…PIEVEGVNDR (226 aa)). UDP-N-acetyl-alpha-D-glucosamine contacts are provided by residues 8–11 (LAAG), Lys-22, Gln-73, 78–79 (GT), 100–102 (YGD), Gly-137, Glu-151, Asn-166, and Asn-224. Mg(2+) is bound at residue Asp-102. Asn-224 contributes to the Mg(2+) binding site. Residues 227-247 (AQLARLERAFQAAQAKKLLEQ) form a linker region. The interval 248-453 (GVMLRDPARF…TGWQRPVKKK (206 aa)) is N-acetyltransferase. The UDP-N-acetyl-alpha-D-glucosamine site is built by Arg-330 and Lys-348. His-360 acts as the Proton acceptor in catalysis. Positions 363 and 374 each coordinate UDP-N-acetyl-alpha-D-glucosamine. Residues Ala-377, 383 to 384 (NY), Ser-402, Ala-420, and Arg-437 each bind acetyl-CoA.

This sequence in the N-terminal section; belongs to the N-acetylglucosamine-1-phosphate uridyltransferase family. It in the C-terminal section; belongs to the transferase hexapeptide repeat family. Homotrimer. The cofactor is Mg(2+).

It is found in the cytoplasm. The catalysed reaction is alpha-D-glucosamine 1-phosphate + acetyl-CoA = N-acetyl-alpha-D-glucosamine 1-phosphate + CoA + H(+). The enzyme catalyses N-acetyl-alpha-D-glucosamine 1-phosphate + UTP + H(+) = UDP-N-acetyl-alpha-D-glucosamine + diphosphate. Its pathway is nucleotide-sugar biosynthesis; UDP-N-acetyl-alpha-D-glucosamine biosynthesis; N-acetyl-alpha-D-glucosamine 1-phosphate from alpha-D-glucosamine 6-phosphate (route II): step 2/2. It functions in the pathway nucleotide-sugar biosynthesis; UDP-N-acetyl-alpha-D-glucosamine biosynthesis; UDP-N-acetyl-alpha-D-glucosamine from N-acetyl-alpha-D-glucosamine 1-phosphate: step 1/1. It participates in bacterial outer membrane biogenesis; LPS lipid A biosynthesis. In terms of biological role, catalyzes the last two sequential reactions in the de novo biosynthetic pathway for UDP-N-acetylglucosamine (UDP-GlcNAc). The C-terminal domain catalyzes the transfer of acetyl group from acetyl coenzyme A to glucosamine-1-phosphate (GlcN-1-P) to produce N-acetylglucosamine-1-phosphate (GlcNAc-1-P), which is converted into UDP-GlcNAc by the transfer of uridine 5-monophosphate (from uridine 5-triphosphate), a reaction catalyzed by the N-terminal domain. The polypeptide is Bifunctional protein GlmU (Vibrio vulnificus (strain CMCP6)).